Consider the following 566-residue polypeptide: Intracellular exo-alpha-(1-&gt;5)-L-arabinofuranosidase (566 aa).

The segment covering 1 to 12 (MTTHNSQYSAET) has biased composition (polar residues). Residues 1–39 (MTTHNSQYSAETTHPDKQESSPAPTAAGTTASNVSTTGN) form a disordered region. Over residues 20-32 (SSPAPTAAGTTAS) the composition is skewed to low complexity. Alpha-L-arabinofuranose-binding residues include glutamate 69, asparagine 114, and asparagine 214. Glutamate 215 acts as the Proton donor/acceptor in catalysis. Residues tyrosine 286, glutamate 340, and glutamine 409 each contribute to the alpha-L-arabinofuranose site. The active-site Nucleophile is glutamate 340.

The protein belongs to the glycosyl hydrolase 51 family. Homohexamer; trimer of dimers.

The protein resides in the cytoplasm. It catalyses the reaction Hydrolysis of terminal non-reducing alpha-L-arabinofuranoside residues in alpha-L-arabinosides.. It participates in glycan metabolism; L-arabinan degradation. With respect to regulation, completely inhibited by Hg(2+) and Cu(2+) ions, whereas 1 mM Zn(2+) inhibited activity by 51%. Functionally, involved in the degradation of arabinan and is a key enzyme in the complete degradation of the plant cell wall. Catalyzes the cleavage of terminal alpha-(1-&gt;5)-arabinofuranosyl bonds in different hemicellulosic homopolysaccharides (branched and debranched arabinans). It is active with sugar beet arabinan and wheat arabinoxylan. It also exhibited activity against alpha-(1-&gt;5)-linked arabinobiose, arabinotriose, arabinotetraose, and arabinopentaose. This Bifidobacterium longum protein is Intracellular exo-alpha-(1-&gt;5)-L-arabinofuranosidase (abfB).